Reading from the N-terminus, the 335-residue chain is Phospho-N-acetylmuramoyl-pentapeptide-transferase (335 aa).

The next 9 helical transmembrane spans lie at 2-22 (PPLFCVLKAFFIGLVVSLILV), 55-75 (IPTAGGIIFVLSVVLSILLLL), 77-97 (CNLWSTWFLVGATLLWGALGW), 118-137 (FFIQNCLAIGTVLPIMIAYG), 153-173 (LPHCWLGYLFSFSIAVLAIVG), 193-213 (VIACLGMLIVTFAYGAPWAFI), 238-258 (IFMGDTGSLFLGGMLGICAVL), 263-283 (FMLLFMGGIFVLESLSVILQV), and 313-333 (VVRNFWIIEFLCVAIGIFAVF).

The protein belongs to the glycosyltransferase 4 family. MraY subfamily. Mg(2+) is required as a cofactor.

The protein localises to the cell inner membrane. It carries out the reaction UDP-N-acetyl-alpha-D-muramoyl-L-alanyl-gamma-D-glutamyl-meso-2,6-diaminopimeloyl-D-alanyl-D-alanine + di-trans,octa-cis-undecaprenyl phosphate = di-trans,octa-cis-undecaprenyl diphospho-N-acetyl-alpha-D-muramoyl-L-alanyl-D-glutamyl-meso-2,6-diaminopimeloyl-D-alanyl-D-alanine + UMP. Its pathway is cell wall biogenesis; peptidoglycan biosynthesis. Catalyzes the initial step of the lipid cycle reactions in the biosynthesis of the cell wall peptidoglycan: transfers peptidoglycan precursor phospho-MurNAc-pentapeptide from UDP-MurNAc-pentapeptide onto the lipid carrier undecaprenyl phosphate, yielding undecaprenyl-pyrophosphoryl-MurNAc-pentapeptide, known as lipid I. The sequence is that of Phospho-N-acetylmuramoyl-pentapeptide-transferase from Chlamydia muridarum (strain MoPn / Nigg).